The primary structure comprises 245 residues: Ubiquinone/menaquinone biosynthesis C-methyltransferase UbiE (245 aa).

S-adenosyl-L-methionine-binding positions include Thr-71, Asp-92, and 118–119; that span reads DA.

Belongs to the class I-like SAM-binding methyltransferase superfamily. MenG/UbiE family.

It carries out the reaction a 2-demethylmenaquinol + S-adenosyl-L-methionine = a menaquinol + S-adenosyl-L-homocysteine + H(+). It catalyses the reaction a 2-methoxy-6-(all-trans-polyprenyl)benzene-1,4-diol + S-adenosyl-L-methionine = a 5-methoxy-2-methyl-3-(all-trans-polyprenyl)benzene-1,4-diol + S-adenosyl-L-homocysteine + H(+). The protein operates within quinol/quinone metabolism; menaquinone biosynthesis; menaquinol from 1,4-dihydroxy-2-naphthoate: step 2/2. It functions in the pathway cofactor biosynthesis; ubiquinone biosynthesis. Methyltransferase required for the conversion of demethylmenaquinol (DMKH2) to menaquinol (MKH2) and the conversion of 2-polyprenyl-6-methoxy-1,4-benzoquinol (DDMQH2) to 2-polyprenyl-3-methyl-6-methoxy-1,4-benzoquinol (DMQH2). The protein is Ubiquinone/menaquinone biosynthesis C-methyltransferase UbiE of Neisseria meningitidis serogroup A / serotype 4A (strain DSM 15465 / Z2491).